The chain runs to 351 residues: Soluble interferon alpha/beta receptor OPG204 (351 aa).

Residues 1–19 form the signal peptide; the sequence is MTMKMMVHIYFVSLLLLLF. Ig-like C2-type domains lie at 65 to 147 and 155 to 237; these read LGEP…RSHI and PKTY…IVVS. Intrachain disulfides connect Cys-73-Cys-129 and Cys-172-Cys-221. N-linked (GlcNAc...) asparagine; by host glycans are attached at residues Asn-117, Asn-182, Asn-261, Asn-269, and Asn-321. The 100-residue stretch at 246–345 folds into the Ig-like V-type domain; the sequence is PSQDHRFKLI…HNYYFEKTLT (100 aa). A disulfide bond links Cys-272 and Cys-333.

The protein belongs to the interleukin-1 receptor family. Interacts with host IFNA1.

The protein resides in the secreted. Counteracts the antiviral effects of host IFN-alpha/beta and key IFN-inducible proteins involved in viral RNA degradation suxh as host OAS1. Acts as a soluble IFN-alpha receptor and thus inhibits the interaction between host IFN-alpha and its receptor. The chain is Soluble interferon alpha/beta receptor OPG204 (OPG204) from Vaccinia virus (strain Western Reserve) (VACV).